Consider the following 349-residue polypeptide: Isopentenyl-diphosphate delta-isomerase (349 aa).

12 to 13 (RK) provides a ligand contact to substrate. Residues serine 69, 70-72 (SMT), serine 101, and asparagine 129 each bind FMN. A substrate-binding site is contributed by 101–103 (SQR). A substrate-binding site is contributed by glutamine 164. Mg(2+) is bound at residue glutamate 165. FMN contacts are provided by residues lysine 196, threonine 226, 279-281 (GIR), and 300-301 (AA).

It belongs to the IPP isomerase type 2 family. In terms of assembly, homooctamer. Dimer of tetramers. It depends on FMN as a cofactor. NADPH serves as cofactor. Mg(2+) is required as a cofactor.

It is found in the cytoplasm. The enzyme catalyses isopentenyl diphosphate = dimethylallyl diphosphate. Its function is as follows. Involved in the biosynthesis of isoprenoids. Catalyzes the 1,3-allylic rearrangement of the homoallylic substrate isopentenyl (IPP) to its allylic isomer, dimethylallyl diphosphate (DMAPP). The sequence is that of Isopentenyl-diphosphate delta-isomerase from Paracoccus zeaxanthinifaciens.